The primary structure comprises 1005 residues: Beta/gamma crystallin domain-containing protein 3 (1005 aa).

5 positions are modified to phosphoserine: serine 122, serine 129, serine 130, serine 136, and serine 140. Disordered regions lie at residues 132-159 and 173-198; these read EDVL…PSSV and NFDG…DWRT. Residues 180–189 are compositionally biased toward acidic residues; sequence QEAEEEEEEA. 9 consecutive Beta/gamma crystallin 'Greek key' domains span residues 367 to 416, 462 to 500, 512 to 556, 557 to 599, 605 to 647, 648 to 690, 701 to 737, 738 to 781, and 828 to 869; these read GCWI…KRVL, GVWL…HPLQ, LKVI…RVIG, GVWV…RYLQ, SSIT…HVKS, GVWV…RPIQ, HLLK…KVLR, GCWL…QPID, and GLWI…RPMK. The Ricin B-type lectin domain maps to 871–1003; the sequence is PAVYIRIRNR…GEETQKWDIE (133 aa).

The protein belongs to the beta/gamma-crystallin family.

The chain is Beta/gamma crystallin domain-containing protein 3 (Crybg3) from Mus musculus (Mouse).